Reading from the N-terminus, the 403-residue chain is Phosphopentomutase (403 aa).

Mn(2+) contacts are provided by Asp13, Asp298, His303, Asp339, His340, and His351.

The protein belongs to the phosphopentomutase family. Requires Mn(2+) as cofactor.

It is found in the cytoplasm. The catalysed reaction is 2-deoxy-alpha-D-ribose 1-phosphate = 2-deoxy-D-ribose 5-phosphate. It carries out the reaction alpha-D-ribose 1-phosphate = D-ribose 5-phosphate. Its pathway is carbohydrate degradation; 2-deoxy-D-ribose 1-phosphate degradation; D-glyceraldehyde 3-phosphate and acetaldehyde from 2-deoxy-alpha-D-ribose 1-phosphate: step 1/2. Functionally, isomerase that catalyzes the conversion of deoxy-ribose 1-phosphate (dRib-1-P) and ribose 1-phosphate (Rib-1-P) to deoxy-ribose 5-phosphate (dRib-5-P) and ribose 5-phosphate (Rib-5-P), respectively. This Streptococcus thermophilus (strain ATCC BAA-491 / LMD-9) protein is Phosphopentomutase.